We begin with the raw amino-acid sequence, 457 residues long: Multidrug resistance protein MdtK (457 aa).

Helical transmembrane passes span 11–31, 53–73, 93–113, 127–147, 159–179, 190–210, 249–269, 276–296, 313–333, 357–377, 387–407, and 417–437; these read LSAL…MGVV, IWLP…PVVA, FLAA…EYAI, AIGY…YQVL, PGMM…YIFI, GVGC…LMML, LLFE…LGVV, IALN…VATT, IAAH…AIFT, LMLL…GTGV, IFYI…YLLA, and GPAG…VMMV.

It belongs to the multi antimicrobial extrusion (MATE) (TC 2.A.66.1) family. MdtK subfamily.

The protein localises to the cell inner membrane. In terms of biological role, multidrug efflux pump that functions probably as a Na(+)/drug antiporter. The chain is Multidrug resistance protein MdtK from Pectobacterium atrosepticum (strain SCRI 1043 / ATCC BAA-672) (Erwinia carotovora subsp. atroseptica).